Here is a 136-residue protein sequence, read N- to C-terminus: Protein PsiE (136 aa).

Transmembrane regions (helical) follow at residues 15-35 (ILQN…VLFL), 55-75 (YELV…ALIV), 82-102 (FHFP…RLII), and 108-128 (PMDV…LWLC).

It belongs to the PsiE family.

The protein resides in the cell inner membrane. This chain is Protein PsiE, found in Salmonella arizonae (strain ATCC BAA-731 / CDC346-86 / RSK2980).